The sequence spans 444 residues: Probable polygalacturonase At1g80170 (444 aa).

An N-terminal signal peptide occupies residues 1-28; that stretch reads MSYSRGGTLVTLLLLLVVASSLALTANA. PbH1 repeat units follow at residues 208–234, 235–256, 258–278, 288–309, 317–338, and 351–378; these read CRRV…HISV, SRGI…SIVK, STQI…SIGS, VRDI…RIKT, VSKI…IIDQ, and TSAI…KISC. Residue aspartate 249 is the Proton donor of the active site. Histidine 272 is an active-site residue.

Belongs to the glycosyl hydrolase 28 family. In terms of tissue distribution, expressed in young, mature and dehiscing anthers. Found in stems, but not in roots or in abscission zone of floral organs.

It localises to the secreted. It is found in the cell wall. It carries out the reaction (1,4-alpha-D-galacturonosyl)n+m + H2O = (1,4-alpha-D-galacturonosyl)n + (1,4-alpha-D-galacturonosyl)m.. This Arabidopsis thaliana (Mouse-ear cress) protein is Probable polygalacturonase At1g80170.